Here is a 1002-residue protein sequence, read N- to C-terminus: Copper-transporting ATPase HMA5 (1002 aa).

Positions 32 to 48 are enriched in low complexity; it reads RPRYPSMPRRPRSAAVA. Positions 32 to 63 are disordered; sequence RPRYPSMPRRPRSAAVAGEGGEGGGGGGDGDL. Gly residues predominate over residues 49–60; the sequence is GEGGEGGGGGGD. HMA domains follow at residues 75-141, 153-219, and 228-294; these read KVAV…FEAK, LVCR…FEAI, and SRID…SGDL. Residues C86, C89, C164, and C167 each coordinate Cu(+). The next 8 helical transmembrane spans lie at 320 to 340, 354 to 374, 392 to 412, 425 to 445, 585 to 605, 624 to 644, 943 to 963, and 972 to 992; these read FLWS…FMYI, MMSI…FVIG, MDVL…YSIL, FFET…LEIL, VFVP…FLAG, LALQ…LGLA, YVWA…VLFP, and WVAG…SLLL.

This sequence belongs to the cation transport ATPase (P-type) (TC 3.A.3) family. Type IB subfamily. As to expression, expressed in root pericycle cells, xylem region of diffuse vascular bundles in the first node, and vascular tissues of peduncle, rachis and husk.

The protein resides in the cell membrane. It carries out the reaction Cu(+)(in) + ATP + H2O = Cu(+)(out) + ADP + phosphate + H(+). Functionally, copper (Cu) transporter that plays an essential role in promoting translocation of Cu from roots to shoots. Involved in loading Cu to the xylem of the roots and other organs, including panicles. The sequence is that of Copper-transporting ATPase HMA5 from Oryza sativa subsp. japonica (Rice).